The primary structure comprises 361 residues: Single-stranded DNA-binding protein 3 (361 aa).

The residue at position 1 (Met1) is an N-acetylmethionine. Residues 16–48 (AREKLALYVYEYLLHVGAQKSAQTFLSEIRWEK) form the LisH domain. Arg128, Arg134, and Arg138 each carry asymmetric dimethylarginine. Disordered regions lie at residues 140-166 (GNQPPGGVPGTQPLMPNSMDPTRQQGH) and 184-361 (PMGP…TMSV). Residues 223 to 241 (PNSANSIPYSSSSPGTYVG) are compositionally biased toward low complexity. The span at 245-255 (GGGPPGTPIMP) shows a compositional bias: pro residues. The segment covering 258-269 (ADSTNSSDNIYT) has biased composition (polar residues). The span at 288–298 (GSDGPMGGMGG) shows a compositional bias: gly residues. Low complexity predominate over residues 319 to 330 (NSPNNISGISNP). Phosphoserine is present on residues Ser320, Ser325, and Ser328. Thr333 bears the Phosphothreonine mark. A compositionally biased stretch (polar residues) spans 346–361 (HSFQNDNYSPSMTMSV). 2 positions are modified to phosphoserine: Ser354 and Ser360.

Its subcellular location is the nucleus. May be involved in transcription regulation of the alpha 2(I) collagen gene where it binds to the single-stranded polypyrimidine sequences in the promoter region. This chain is Single-stranded DNA-binding protein 3 (Ssbp3), found in Rattus norvegicus (Rat).